We begin with the raw amino-acid sequence, 274 residues long: Homeobox-leucine zipper protein HAT9 (274 aa).

Low complexity predominate over residues 64 to 74 (SSHSGVSSFSS). The segment at 64 to 96 (SSHSGVSSFSSGRVVKRERDGGEESPEEEEMTE) is disordered. The homeobox DNA-binding region spans 110 to 169 (SARKKLRLTKQQSALLEESFKDHSTLNPKQKQVLARQLNLRPRQVEVWFQNRRARTKLKQ). Residues 177-198 (LKKCCETLADENIRLQKEIQEL) are leucine-zipper.

The protein belongs to the HD-ZIP homeobox family. Class II subfamily.

It is found in the nucleus. Probable transcription factor. The protein is Homeobox-leucine zipper protein HAT9 (HAT9) of Arabidopsis thaliana (Mouse-ear cress).